Here is a 240-residue protein sequence, read N- to C-terminus: Small ribosomal subunit protein uS2c (240 aa).

This sequence belongs to the universal ribosomal protein uS2 family.

The protein localises to the plastid. The protein resides in the chloroplast. This chain is Small ribosomal subunit protein uS2c (rps2), found in Cycas taitungensis (Prince sago).